A 179-amino-acid chain; its full sequence is MSITTPRILGIDPGLRVTGFGVIELHGKQLVYVASGCIKSNDKESLPERIKTLFAGISEVIATYQPNQAAVEKVFVNVNPQSTLLLGQARGAAISALVHADLPVAEYTALQTKQAVVGHGKAAKDQVQAMVVRLLNLPGAPTADAADALACAIAHAHGGQGLGAMATAGYRIRGGRLIG.

Catalysis depends on residues Asp12, Glu72, and Asp144. The Mg(2+) site is built by Asp12, Glu72, and Asp144.

This sequence belongs to the RuvC family. In terms of assembly, homodimer which binds Holliday junction (HJ) DNA. The HJ becomes 2-fold symmetrical on binding to RuvC with unstacked arms; it has a different conformation from HJ DNA in complex with RuvA. In the full resolvosome a probable DNA-RuvA(4)-RuvB(12)-RuvC(2) complex forms which resolves the HJ. The cofactor is Mg(2+).

Its subcellular location is the cytoplasm. It catalyses the reaction Endonucleolytic cleavage at a junction such as a reciprocal single-stranded crossover between two homologous DNA duplexes (Holliday junction).. In terms of biological role, the RuvA-RuvB-RuvC complex processes Holliday junction (HJ) DNA during genetic recombination and DNA repair. Endonuclease that resolves HJ intermediates. Cleaves cruciform DNA by making single-stranded nicks across the HJ at symmetrical positions within the homologous arms, yielding a 5'-phosphate and a 3'-hydroxyl group; requires a central core of homology in the junction. The consensus cleavage sequence is 5'-(A/T)TT(C/G)-3'. Cleavage occurs on the 3'-side of the TT dinucleotide at the point of strand exchange. HJ branch migration catalyzed by RuvA-RuvB allows RuvC to scan DNA until it finds its consensus sequence, where it cleaves and resolves the cruciform DNA. The sequence is that of Crossover junction endodeoxyribonuclease RuvC from Dechloromonas aromatica (strain RCB).